A 136-amino-acid chain; its full sequence is Basic phospholipase A2 Tgc-K49 (136 aa).

Residues 1 to 15 (MRTLWIVAVLLVGEG) form the signal peptide. 7 disulfides stabilise this stretch: Cys41-Cys130, Cys43-Cys59, Cys58-Cys110, Cys64-Cys136, Cys65-Cys103, Cys72-Cys96, and Cys90-Cys101. The active site involves His62. The active site involves Asp104.

It belongs to the phospholipase A2 family. Group II subfamily. K49 sub-subfamily. As to expression, expressed by the venom gland.

The protein localises to the secreted. The enzyme catalyses a 1,2-diacyl-sn-glycero-3-phosphocholine + H2O = a 1-acyl-sn-glycero-3-phosphocholine + a fatty acid + H(+). In terms of biological role, PLA2 catalyzes the calcium-dependent hydrolysis of the 2-acyl groups in 3-sn-phosphoglycerides. The chain is Basic phospholipase A2 Tgc-K49 from Trimeresurus gracilis (Kikuchi habu).